A 462-amino-acid chain; its full sequence is Cysteine--tRNA ligase (462 aa).

A Zn(2+)-binding site is contributed by cysteine 28. Positions 30-40 (VTAYDLCHIGH) match the 'HIGH' region motif. Zn(2+)-binding residues include cysteine 209, histidine 234, and glutamate 238. Positions 266–270 (KMSKS) match the 'KMSKS' region motif. Lysine 269 contacts ATP.

This sequence belongs to the class-I aminoacyl-tRNA synthetase family. Monomer. The cofactor is Zn(2+).

It is found in the cytoplasm. The enzyme catalyses tRNA(Cys) + L-cysteine + ATP = L-cysteinyl-tRNA(Cys) + AMP + diphosphate. This is Cysteine--tRNA ligase from Baumannia cicadellinicola subsp. Homalodisca coagulata.